We begin with the raw amino-acid sequence, 623 residues long: Kelch-like protein diablo (623 aa).

Residues 1–54 (MGDLPGSGSTAQPRDAAVTGTGGNSTAGGGSSVGSTAVDRPPSPARLSHTSEKH) form a disordered region. A Phosphothreonine modification is found at Thr19. Gly residues predominate over residues 20–32 (GTGGNSTAGGGSS). Positions 72–139 (CDVVLNVGGR…CYTAHIMVEE (68 aa)) constitute a BTB domain. In terms of domain architecture, BACK spans 174–276 (CLGIRAFADT…SPKFLVGTVG (103 aa)). Kelch repeat units lie at residues 323 to 369 (VLFA…VLND), 371 to 417 (LYAV…VLDG), 418 to 464 (FLYA…VLGG), 466 to 511 (LYAI…VFNN), 513 to 558 (IYAV…VVNG), and 559 to 605 (QLYA…VMRA).

Its pathway is protein modification; protein ubiquitination. Functionally, probable substrate-specific adapter of an E3 ubiquitin-protein ligase complex which mediates the ubiquitination and subsequent proteasomal degradation of target proteins. May have a role in synapse differentiation and growth. The protein is Kelch-like protein diablo of Drosophila erecta (Fruit fly).